The sequence spans 185 residues: Probable RNA 2'-phosphotransferase (185 aa).

Belongs to the KptA/TPT1 family.

Its function is as follows. Removes the 2'-phosphate from RNA via an intermediate in which the phosphate is ADP-ribosylated by NAD followed by a presumed transesterification to release the RNA and generate ADP-ribose 1''-2''-cyclic phosphate (APPR&gt;P). May function as an ADP-ribosylase. The protein is Probable RNA 2'-phosphotransferase of Bacillus thuringiensis subsp. konkukian (strain 97-27).